Here is a 90-residue protein sequence, read N- to C-terminus: Acylphosphatase (90 aa).

In terms of domain architecture, Acylphosphatase-like spans 5 to 90 (SFVVRVWGLV…PPKGSGFHTN (86 aa)). Active-site residues include Arg-20 and Asn-38.

Belongs to the acylphosphatase family.

The catalysed reaction is an acyl phosphate + H2O = a carboxylate + phosphate + H(+). This chain is Acylphosphatase (acyP), found in Aeromonas hydrophila subsp. hydrophila (strain ATCC 7966 / DSM 30187 / BCRC 13018 / CCUG 14551 / JCM 1027 / KCTC 2358 / NCIMB 9240 / NCTC 8049).